The chain runs to 217 residues: Protein DJ-1alpha (217 aa).

C133 functions as the Nucleophile in the catalytic mechanism. C133 is modified (cysteine sulfinic acid (-SO2H); alternate).

As to expression, expressed in testis (at protein level).

It is found in the cytoplasm. It localises to the nucleus. The protein resides in the mitochondrion. Its function is as follows. Plays an important role in cell protection against oxidative stress and cell death acting as oxidative stress sensor. Does not play a role in methylglyoxal detoxification. The sequence is that of Protein DJ-1alpha from Drosophila melanogaster (Fruit fly).